The sequence spans 113 residues: Large ribosomal subunit protein bL17 (113 aa).

It belongs to the bacterial ribosomal protein bL17 family. Part of the 50S ribosomal subunit. Contacts protein L32.

This Clostridium novyi (strain NT) protein is Large ribosomal subunit protein bL17.